Reading from the N-terminus, the 373-residue chain is Forkhead box protein E1 (373 aa).

The segment at 19 to 51 (KEERGETAAGAGVPGEATGRGAGGRRRKRPLQR) is disordered. Residues 41-50 (GGRRRKRPLQ) show a composition bias toward basic residues. The fork-head DNA-binding region spans 53-147 (KPPYSYIALI…ESGSFLRRRK (95 aa)).

Phosphorylated. In terms of tissue distribution, detected in adult brain, placenta, lung, liver, skeletal muscle, kidney, pancreas, heart, colon, small intestine testis and thymus. Expression was strongest in heart and pancreas.

Its subcellular location is the nucleus. Its function is as follows. Transcription factor that binds consensus sites on a variety of gene promoters and activate their transcription. Involved in proper palate formation, most probably through the expression of MSX1 and TGFB3 genes which are direct targets of this transcription factor. Also implicated in thyroid gland morphogenesis. May indirectly play a role in cell growth and migration through the regulation of WNT5A expression. In Homo sapiens (Human), this protein is Forkhead box protein E1 (FOXE1).